Here is a 396-residue protein sequence, read N- to C-terminus: L-lactate dehydrogenase (396 aa).

The 380-residue stretch at 1–380 (MIISAASDYR…TQDSLVQGLG (380 aa)) folds into the FMN hydroxy acid dehydrogenase domain. Tyr24 is a binding site for substrate. Positions 106 and 127 each coordinate FMN. A substrate-binding site is contributed by Tyr129. Position 155 (Thr155) interacts with FMN. A substrate-binding site is contributed by Arg164. An FMN-binding site is contributed by Lys251. His275 (proton acceptor) is an active-site residue. Arg278 lines the substrate pocket. Residue 306-330 (DSGIRNGLDVVRMIALGADTVLLGR) coordinates FMN.

It belongs to the FMN-dependent alpha-hydroxy acid dehydrogenase family. It depends on FMN as a cofactor.

It is found in the cell inner membrane. The enzyme catalyses (S)-lactate + A = pyruvate + AH2. In terms of biological role, catalyzes the conversion of L-lactate to pyruvate. Is coupled to the respiratory chain. The protein is L-lactate dehydrogenase of Shigella flexneri serotype 5b (strain 8401).